We begin with the raw amino-acid sequence, 313 residues long: Cytosolic Fe-S cluster assembly factor NUBP1 homolog (313 aa).

A disordered region spans residues 1 to 25 (MSDVPEDANAGCPGTGSAGAGKASG). [4Fe-4S] cluster-binding residues include C12, C26, C29, and C35. Position 66–73 (66–73 (GKGGVGKS)) interacts with ATP. [4Fe-4S] cluster is bound by residues C240 and C243.

The protein belongs to the Mrp/NBP35 ATP-binding proteins family. NUBP1/NBP35 subfamily. Heterotetramer of 2 NUBP1 and 2 NUBP2 chains. The cofactor is [4Fe-4S] cluster.

Its subcellular location is the cytoplasm. It is found in the cell projection. Functionally, component of the cytosolic iron-sulfur (Fe/S) protein assembly (CIA) machinery. Required for maturation of extramitochondrial Fe-S proteins. The NUBP1-NUBP2 heterotetramer forms a Fe-S scaffold complex, mediating the de novo assembly of an Fe-S cluster and its transfer to target apoproteins. Regulates cilium formation and structure. This Caenorhabditis briggsae protein is Cytosolic Fe-S cluster assembly factor NUBP1 homolog.